The primary structure comprises 399 residues: Insertion element IS900 uncharacterized 42 kDa protein (399 aa).

The protein belongs to the transposase IS1111A/IS1328/IS1533 family.

The sequence is that of Insertion element IS900 uncharacterized 42 kDa protein from Mycobacterium paratuberculosis.